The sequence spans 691 residues: MSSPDADQTAPEVLRQWQALAEEVREHQFRYYVRDAPIISDAEFDELLRRLEALEEQHPELRTPDSPTQLVGGAGFATDFEPVDHLERMLSLDNAFTADELAAWAGRIHAEVGDAAHYLCELKIDGVALSLVYREGRLTRASTRGDGRTGEDVTLNARTIADVPERLTPGDDYPVPEVLEVRGEVFFRLDDFQALNASLVEEGKAPFANPRNSAAGSLRQKDPAVTARRRLRMICHGLGHVEGFRPATLHQAYLALRAWGLPVSEHTTLATDLAGVRERIDYWGEHRHEVDHEIDGVVVKVDEVALQRRLGSTSRAPRWAIAYKYPPEEAQTKLLDIRVNVGRTGRITPFAFMTPVKVAGSTVGQATLHNASEIKRKGVLIGDTVVIRKAGDVIPEVLGPVVELRDGSEREFIMPTTCPECGSPLAPEKEGDADIRCPNARGCPGQLRERVFHVASRNGLDIEVLGYEAGVALLQAKVIADEGELFALTERDLLRTDLFRTKAGELSANGKRLLVNLDKAKAAPLWRVLVALSIRHVGPTAARALATEFGSLDAIAAASTDQLAAVEGVGPTIAAAVTEWFAVDWHREIVDKWRAAGVRMVDERDESVPRTLAGLTIVVTGSLTGFSRDDAKEAIVARGGKAAGSVSKKTNYVVAGDSPGSKYDKAVELGVPILDEDGFRRLLADGPASRT.

NAD(+)-binding positions include 41–45 (DAEFD), 91–92 (SL), and Glu121. The active-site N6-AMP-lysine intermediate is Lys123. The NAD(+) site is built by Arg144, Glu184, Lys300, and Lys324. Zn(2+) is bound by residues Cys418, Cys421, Cys437, and Cys443. The region spanning 607–691 (SVPRTLAGLT…LLADGPASRT (85 aa)) is the BRCT domain.

It belongs to the NAD-dependent DNA ligase family. LigA subfamily. Requires Mg(2+) as cofactor. It depends on Mn(2+) as a cofactor.

The enzyme catalyses NAD(+) + (deoxyribonucleotide)n-3'-hydroxyl + 5'-phospho-(deoxyribonucleotide)m = (deoxyribonucleotide)n+m + AMP + beta-nicotinamide D-nucleotide.. Its function is as follows. DNA ligase that catalyzes the formation of phosphodiester linkages between 5'-phosphoryl and 3'-hydroxyl groups in double-stranded DNA using NAD as a coenzyme and as the energy source for the reaction. It is essential for DNA replication and repair of damaged DNA. This chain is DNA ligase, found in Mycobacterium tuberculosis (strain ATCC 25177 / H37Ra).